Reading from the N-terminus, the 152-residue chain is Flagellar assembly factor FliW (152 aa).

The protein belongs to the FliW family. As to quaternary structure, interacts with translational regulator CsrA and flagellin(s).

Its subcellular location is the cytoplasm. Acts as an anti-CsrA protein, binds CsrA and prevents it from repressing translation of its target genes, one of which is flagellin. Binds to flagellin and participates in the assembly of the flagellum. This chain is Flagellar assembly factor FliW, found in Desulfitobacterium hafniense (strain Y51).